We begin with the raw amino-acid sequence, 379 residues long: Pathogen-associated molecular patterns-induced protein A70 (379 aa).

A helical transmembrane segment spans residues 7 to 29; sequence VASFFTPTTLFLLLNLMIGTIVV. An N-linked (GlcNAc...) asparagine glycan is attached at N122. The segment at 133–154 is disordered; the sequence is TGSDPHSHSHSHLDLHPDPAPA. Over residues 137-149 the composition is skewed to basic and acidic residues; sequence PHSHSHSHLDLHP. N170 is a glycosylation site (N-linked (GlcNAc...) asparagine). 2 disordered regions span residues 216-238 and 256-347; these read PEED…LTRA and SDPD…DGVD. The span at 221-231 shows a compositional bias: polar residues; it reads PTGTGVNSQIN. Basic and acidic residues-rich tracts occupy residues 256–285 and 322–335; these read SDPD…ESKK and SLER…RVER.

The protein localises to the membrane. This chain is Pathogen-associated molecular patterns-induced protein A70, found in Arabidopsis thaliana (Mouse-ear cress).